A 79-amino-acid chain; its full sequence is Cytochrome c oxidase assembly factor 6 homolog (79 aa).

Positions 9-52 constitute a CHCH domain; sequence RQACWGARDLYWRCLDDNAEDAARCQKLRSSFEASCPQQWIKYF. A Cx9C motif motif is present at residues 12–22; sequence CWGARDLYWRC. Intrachain disulfides connect Cys12–Cys44 and Cys22–Cys33. A Cx10C motif motif is present at residues 33–44; the sequence is CQKLRSSFEASC.

It belongs to the cytochrome c oxidase subunit 6B family. Found in a complex with TMEM177, COX20, MT-CO2/COX2, COX18, SCO1 and SCO2. Interacts with COA1, MT-CO2/COX2, SCO1, SCO2 and COX20. Interacts with COX20 in a MT-CO2/COX2- and COX18-dependent manner. Interacts with COX16.

Its subcellular location is the mitochondrion. The protein resides in the mitochondrion intermembrane space. Involved in the maturation of the mitochondrial respiratory chain complex IV subunit MT-CO2/COX2. Thereby, may regulate early steps of complex IV assembly. Mitochondrial respiratory chain complex IV or cytochrome c oxidase is the component of the respiratory chain that catalyzes the transfer of electrons from intermembrane space cytochrome c to molecular oxygen in the matrix and as a consequence contributes to the proton gradient involved in mitochondrial ATP synthesis. May also be required for efficient formation of respiratory supercomplexes comprised of complexes III and IV. This Mus musculus (Mouse) protein is Cytochrome c oxidase assembly factor 6 homolog (Coa6).